A 162-amino-acid chain; its full sequence is Crossover junction endodeoxyribonuclease RuvC (162 aa).

Active-site residues include aspartate 7, glutamate 67, and aspartate 140. Positions 7, 67, and 140 each coordinate Mg(2+).

It belongs to the RuvC family. As to quaternary structure, homodimer which binds Holliday junction (HJ) DNA. The HJ becomes 2-fold symmetrical on binding to RuvC with unstacked arms; it has a different conformation from HJ DNA in complex with RuvA. In the full resolvosome a probable DNA-RuvA(4)-RuvB(12)-RuvC(2) complex forms which resolves the HJ. Requires Mg(2+) as cofactor.

The protein localises to the cytoplasm. The enzyme catalyses Endonucleolytic cleavage at a junction such as a reciprocal single-stranded crossover between two homologous DNA duplexes (Holliday junction).. The RuvA-RuvB-RuvC complex processes Holliday junction (HJ) DNA during genetic recombination and DNA repair. Endonuclease that resolves HJ intermediates. Cleaves cruciform DNA by making single-stranded nicks across the HJ at symmetrical positions within the homologous arms, yielding a 5'-phosphate and a 3'-hydroxyl group; requires a central core of homology in the junction. The consensus cleavage sequence is 5'-(A/T)TT(C/G)-3'. Cleavage occurs on the 3'-side of the TT dinucleotide at the point of strand exchange. HJ branch migration catalyzed by RuvA-RuvB allows RuvC to scan DNA until it finds its consensus sequence, where it cleaves and resolves the cruciform DNA. The polypeptide is Crossover junction endodeoxyribonuclease RuvC (Heliobacterium modesticaldum (strain ATCC 51547 / Ice1)).